Reading from the N-terminus, the 586-residue chain is NADH-quinone oxidoreductase subunit C/D 2 (586 aa).

An NADH dehydrogenase I subunit C region spans residues 1–173 (MKWVNKGTVE…RTDPPSHDFE (173 aa)). The interval 197–586 (AELVLNWGPL…LDPVVGETDR (390 aa)) is NADH dehydrogenase I subunit D.

The protein in the N-terminal section; belongs to the complex I 30 kDa subunit family. In the C-terminal section; belongs to the complex I 49 kDa subunit family. In terms of assembly, NDH-1 is composed of 13 different subunits. Subunits NuoB, CD, E, F, and G constitute the peripheral sector of the complex.

Its subcellular location is the cell inner membrane. The catalysed reaction is a quinone + NADH + 5 H(+)(in) = a quinol + NAD(+) + 4 H(+)(out). In terms of biological role, NDH-1 shuttles electrons from NADH, via FMN and iron-sulfur (Fe-S) centers, to quinones in the respiratory chain. The immediate electron acceptor for the enzyme in this species is believed to be ubiquinone. Couples the redox reaction to proton translocation (for every two electrons transferred, four hydrogen ions are translocated across the cytoplasmic membrane), and thus conserves the redox energy in a proton gradient. The protein is NADH-quinone oxidoreductase subunit C/D 2 (nuoC2) of Aquifex aeolicus (strain VF5).